A 37-amino-acid polypeptide reads, in one-letter code: Large ribosomal subunit protein bL36c (37 aa).

The protein belongs to the bacterial ribosomal protein bL36 family.

Its subcellular location is the plastid. The protein resides in the chloroplast. The polypeptide is Large ribosomal subunit protein bL36c (Tupiella akineta (Green alga)).